Here is a 209-residue protein sequence, read N- to C-terminus: D-aminoacyl-tRNA deacylase 1 (209 aa).

Mg(2+) is bound by residues Val-4, Gln-6, and Cys-28. Positions 139–140 (GP) match the Gly-cisPro motif, important for rejection of L-amino acids motif. The tract at residues 142-209 (TIELESPAPG…EGDVSSEREP (68 aa)) is disordered. Composition is skewed to basic and acidic residues over residues 159-170 (QLSKLEKQQQRK) and 181-194 (SSKERSAPRKEDRS). Phosphoserine occurs at positions 197, 204, and 205.

The protein belongs to the DTD family. Homodimer. Interacts with CDC45 and TOPBP1. Preferentially phosphorylated in cells arrested early in S phase. Phosphorylation in the C-terminus weakens the interaction with CDC45.

The protein resides in the nucleus. It is found in the cytoplasm. It carries out the reaction glycyl-tRNA(Ala) + H2O = tRNA(Ala) + glycine + H(+). The catalysed reaction is a D-aminoacyl-tRNA + H2O = a tRNA + a D-alpha-amino acid + H(+). Its function is as follows. An aminoacyl-tRNA editing enzyme that deacylates mischarged D-aminoacyl-tRNAs. Also deacylates mischarged glycyl-tRNA(Ala), protecting cells against glycine mischarging by AlaRS. Acts via tRNA-based rather than protein-based catalysis; rejects L-amino acids rather than detecting D-amino acids in the active site. By recycling D-aminoacyl-tRNA to D-amino acids and free tRNA molecules, this enzyme counteracts the toxicity associated with the formation of D-aminoacyl-tRNA entities in vivo and helps enforce protein L-homochirality. In terms of biological role, ATPase involved in DNA replication, may facilitate loading of CDC45 onto pre-replication complexes. The chain is D-aminoacyl-tRNA deacylase 1 (DTD1) from Bos taurus (Bovine).